The chain runs to 196 residues: HTH-type transcriptional regulator EcpR (196 aa).

The HTH luxR-type domain occupies 138-196; sequence KDIKKDKITDREMEIIRMTAQGMQPKSIARIENCSVKTVYTHRRNAEAKLYSKIYKLVQ. A DNA-binding region (H-T-H motif) is located at residues 162-181; it reads PKSIARIENCSVKTVYTHRR.

It belongs to the EcpR/MatA family.

The protein localises to the cytoplasm. Its function is as follows. Part of the ecpRABCDE operon, which encodes the E.coli common pilus (ECP). ECP is found in both commensal and pathogenic strains and plays a dual role in early-stage biofilm development and host cell recognition. Positively regulates the expression of the ecp operon. This is HTH-type transcriptional regulator EcpR (ecpR) from Escherichia coli (strain K12 / DH10B).